The chain runs to 315 residues: Alpha- and gamma-adaptin-binding protein p34 (315 aa).

The tract at residues 197–233 (IGSADPCHPEQPHLPAADRTESLSDHRGGASNTTDAQ) is disordered. Over residues 203 to 224 (CHPEQPHLPAADRTESLSDHRG) the composition is skewed to basic and acidic residues. 2 positions are modified to phosphoserine: Ser-310 and Ser-311.

As to quaternary structure, associated with AP-1 and AP-2 complexes.

It is found in the cytoplasm. It localises to the cytosol. May be involved in endocytic recycling of growth factor receptors such as EGFR. This Pongo abelii (Sumatran orangutan) protein is Alpha- and gamma-adaptin-binding protein p34 (AAGAB).